The chain runs to 283 residues: Acetyl-coenzyme A carboxylase carboxyl transferase subunit beta (283 aa).

The 255-residue stretch at 29–283 (LWISCPKCQQ…VKIHSMKGAF (255 aa)) folds into the CoA carboxyltransferase N-terminal domain. Cys33, Cys36, Cys51, and Cys54 together coordinate Zn(2+). The segment at 33–54 (CPKCQQSIYHKDLGKYKTCPNC) adopts a C4-type zinc-finger fold.

It belongs to the AccD/PCCB family. Acetyl-CoA carboxylase is a heterohexamer composed of biotin carboxyl carrier protein (AccB), biotin carboxylase (AccC) and two subunits each of ACCase subunit alpha (AccA) and ACCase subunit beta (AccD). Zn(2+) is required as a cofactor.

It is found in the cytoplasm. It catalyses the reaction N(6)-carboxybiotinyl-L-lysyl-[protein] + acetyl-CoA = N(6)-biotinyl-L-lysyl-[protein] + malonyl-CoA. It participates in lipid metabolism; malonyl-CoA biosynthesis; malonyl-CoA from acetyl-CoA: step 1/1. Functionally, component of the acetyl coenzyme A carboxylase (ACC) complex. Biotin carboxylase (BC) catalyzes the carboxylation of biotin on its carrier protein (BCCP) and then the CO(2) group is transferred by the transcarboxylase to acetyl-CoA to form malonyl-CoA. The protein is Acetyl-coenzyme A carboxylase carboxyl transferase subunit beta of Ligilactobacillus salivarius (strain UCC118) (Lactobacillus salivarius).